The chain runs to 115 residues: Cell division protein FtsL (115 aa).

Residues 1-25 are Cytoplasmic-facing; sequence MNTATRVIVAQNVRTRNRTFQITKQ. The helical transmembrane segment at 26–46 threads the bilayer; it reads GVVIVALVIALLCSAFGVVYF. At 47 to 115 the chain is on the periplasmic side; that stretch reads KDLNRRLFIQ…ILVNADAMIE (69 aa).

Belongs to the FtsL family. In terms of assembly, part of a complex composed of FtsB, FtsL and FtsQ.

It localises to the cell inner membrane. Essential cell division protein. May link together the upstream cell division proteins, which are predominantly cytoplasmic, with the downstream cell division proteins, which are predominantly periplasmic. In Coxiella burnetii (strain RSA 493 / Nine Mile phase I), this protein is Cell division protein FtsL.